Consider the following 142-residue polypeptide: Large ribosomal subunit protein uL11 (142 aa).

This sequence belongs to the universal ribosomal protein uL11 family. In terms of assembly, part of the ribosomal stalk of the 50S ribosomal subunit. Interacts with L10 and the large rRNA to form the base of the stalk. L10 forms an elongated spine to which L12 dimers bind in a sequential fashion forming a multimeric L10(L12)X complex. In terms of processing, one or more lysine residues are methylated.

Forms part of the ribosomal stalk which helps the ribosome interact with GTP-bound translation factors. This is Large ribosomal subunit protein uL11 from Maricaulis maris (strain MCS10) (Caulobacter maris).